Consider the following 64-residue polypeptide: Putative neurotoxin 6 (64 aa).

The first 24 residues, 1-24 (MKNKFAALVITLFVLVLAIDNVTT), serve as a signal peptide directing secretion.

The protein belongs to the scolopendra neurotoxin 6 family. Contains 3 disulfide bonds. As to expression, expressed by the venom gland.

The protein localises to the secreted. The polypeptide is Putative neurotoxin 6 (Scolopendra mutilans (Chinese red-headed centipede)).